Consider the following 933-residue polypeptide: Myocardin (933 aa).

The MEF2C-binding signature appears at 12–27 (IRSKFRSVLQLRLQQR). 3 RPEL repeats span residues 18 to 43 (SVLQLRLQQRRTQEQLANEGIIPPLR), 62 to 87 (DTLKHKVRNRSDRGNVVKMHILQASS), and 106 to 131 (DDLNEKIALRPGPLELVEKNILPVDC). Positions 153-205 (FEEDSSSDGLSPDQTRSEDLPGSAGSPLDTKAAETPLAGPRGTVQDLTLGSEN) are HDAC5-binding. 2 disordered regions span residues 154–282 (EEDS…PPPM) and 324–365 (NEQM…GPLP). Residues 210 to 220 (SAPQSGNQSDL) show a composition bias toward polar residues. Over residues 248-265 (NRHKKPKDPKPKVKKLKY) the composition is skewed to basic residues. Over residues 330–346 (NPNSSSAPLSSTPLSPA) the composition is skewed to low complexity. Polar residues predominate over residues 347–357 (KNSFSGQTGVS). Residues 368 to 402 (LDDLKVSELRQQLRIRGLPVSGTKTALMDRLRPFQ) enclose the SAP domain. Residues Ser445, Ser449, Ser453, and Ser457 each carry the phosphoserine; by GSK3-beta modification. The stretch at 515–550 (LVEKQKVINELTWKLQQEQRQVEELRMQLQKQKRGT) forms a coiled coil. Residues 568–613 (DAGSSCPFAPLPRAVKRQSNSSEEQPAAGDAARLRPLGNTHCAESS) are disordered. Phosphoserine; by GSK3-beta is present on residues Ser621, Ser625, Ser629, and Ser633. Disordered stretches follow at residues 630–672 (PQHS…VSSP) and 760–794 (PKIPGSSRSPTAALPKPSATFDQASSGGQLAFDHY). The tract at residues 712 to 933 (ITQPPSYEDA…SPMDLHLQQW (222 aa)) is required for interaction with and ubiquitination by STUB1. A phosphoserine; by MAPK1 and MAPK3 mark is found at Ser810, Ser857, and Ser864. The residue at position 891 (Thr891) is a Phosphothreonine; by MAPK1 and MAPK3.

As to quaternary structure, homodimer. Interacts with MLLT7/FOXO4. Interacts with SRF, its association does not depend on specific DNA sequences for ternary complex formation. Interacts (via C-terminal) with EP300 (via the CREB-binding domain). Interacts with HDAC4 and HDAC5. Interacts with MEF2C. Interacts (via C-terminus) with STUB1/CHIP. Interacts with PURB. Ubiquitinated; by STUB1/CHIP at the C-terminus, leading to its degradation by the proteasome. Phosphorylation by GSK3B is required for STUB1/CHIP-mediated ubiquitination. Post-translationally, phosphorylation negatively regulates the intrinsic myocardin transcriptional activity. Phosphorylated; by GSK3B. In terms of tissue distribution, expressed in the heart and in smooth muscle cells-containing tissues (aorta, pulmonary vein, lung), but is not detectable in skeletal muscle, liver, kidney and spleen.

The protein resides in the nucleus. In terms of biological role, smooth muscle cells (SM) and cardiac muscle cells-specific transcriptional factor which uses the canonical single or multiple CArG boxes DNA sequence. Acts as a cofactor of serum response factor (SRF) with the potential to modulate SRF-target genes. Plays a crucial role in cardiogenesis, urinary bladder development, and differentiation of the smooth muscle cell lineage (myogenesis). Positively regulates the transcription of genes involved in vascular smooth muscle contraction. The polypeptide is Myocardin (MYOCD) (Sus scrofa (Pig)).